A 451-amino-acid polypeptide reads, in one-letter code: Bifunctional protein GlmU (451 aa).

The interval Met1–Arg229 is pyrophosphorylase. Residues Leu8–Gly11, Lys22, Gln72, and Gly77–Thr78 each bind UDP-N-acetyl-alpha-D-glucosamine. Asp102 lines the Mg(2+) pocket. The UDP-N-acetyl-alpha-D-glucosamine site is built by Gly139, Glu154, and Asn227. Asn227 is a Mg(2+) binding site. Residues Leu230–Asn250 are linker. The interval Gly251 to Lys451 is N-acetyltransferase. UDP-N-acetyl-alpha-D-glucosamine contacts are provided by Arg332 and Lys350. The active-site Proton acceptor is His362. UDP-N-acetyl-alpha-D-glucosamine-binding residues include Tyr365 and Asn376. Acetyl-CoA is bound by residues Asn385–Tyr386, Ala422, and Arg439.

It in the N-terminal section; belongs to the N-acetylglucosamine-1-phosphate uridyltransferase family. In the C-terminal section; belongs to the transferase hexapeptide repeat family. As to quaternary structure, homotrimer. Requires Mg(2+) as cofactor.

Its subcellular location is the cytoplasm. It catalyses the reaction alpha-D-glucosamine 1-phosphate + acetyl-CoA = N-acetyl-alpha-D-glucosamine 1-phosphate + CoA + H(+). It carries out the reaction N-acetyl-alpha-D-glucosamine 1-phosphate + UTP + H(+) = UDP-N-acetyl-alpha-D-glucosamine + diphosphate. The protein operates within nucleotide-sugar biosynthesis; UDP-N-acetyl-alpha-D-glucosamine biosynthesis; N-acetyl-alpha-D-glucosamine 1-phosphate from alpha-D-glucosamine 6-phosphate (route II): step 2/2. It functions in the pathway nucleotide-sugar biosynthesis; UDP-N-acetyl-alpha-D-glucosamine biosynthesis; UDP-N-acetyl-alpha-D-glucosamine from N-acetyl-alpha-D-glucosamine 1-phosphate: step 1/1. It participates in bacterial outer membrane biogenesis; LPS lipid A biosynthesis. Catalyzes the last two sequential reactions in the de novo biosynthetic pathway for UDP-N-acetylglucosamine (UDP-GlcNAc). The C-terminal domain catalyzes the transfer of acetyl group from acetyl coenzyme A to glucosamine-1-phosphate (GlcN-1-P) to produce N-acetylglucosamine-1-phosphate (GlcNAc-1-P), which is converted into UDP-GlcNAc by the transfer of uridine 5-monophosphate (from uridine 5-triphosphate), a reaction catalyzed by the N-terminal domain. The polypeptide is Bifunctional protein GlmU (Staphylococcus epidermidis (strain ATCC 35984 / DSM 28319 / BCRC 17069 / CCUG 31568 / BM 3577 / RP62A)).